A 359-amino-acid chain; its full sequence is UPF0283 membrane protein R01807 (359 aa).

Helical transmembrane passes span 76 to 96 (FGKIAAGAFGILISLAVGLWI) and 109 to 129 (WLGYGAVAVVAIGVIAFLIVV).

This sequence belongs to the UPF0283 family.

The protein resides in the cell inner membrane. The protein is UPF0283 membrane protein R01807 of Rhizobium meliloti (strain 1021) (Ensifer meliloti).